The following is a 190-amino-acid chain: Elongation factor P 2 (190 aa).

Belongs to the elongation factor P family.

It is found in the cytoplasm. It functions in the pathway protein biosynthesis; polypeptide chain elongation. In terms of biological role, involved in peptide bond synthesis. Stimulates efficient translation and peptide-bond synthesis on native or reconstituted 70S ribosomes in vitro. Probably functions indirectly by altering the affinity of the ribosome for aminoacyl-tRNA, thus increasing their reactivity as acceptors for peptidyl transferase. The sequence is that of Elongation factor P 2 (efp2) from Chlamydia trachomatis serovar D (strain ATCC VR-885 / DSM 19411 / UW-3/Cx).